We begin with the raw amino-acid sequence, 316 residues long: GMP reductase (316 aa).

Cysteine 175 serves as the catalytic Thioimidate intermediate. Valine 202–valine 225 is a binding site for NADP(+).

This sequence belongs to the IMPDH/GMPR family. GuaC type 2 subfamily.

The catalysed reaction is IMP + NH4(+) + NADP(+) = GMP + NADPH + 2 H(+). Catalyzes the irreversible NADPH-dependent deamination of GMP to IMP. It functions in the conversion of nucleobase, nucleoside and nucleotide derivatives of G to A nucleotides, and in maintaining the intracellular balance of A and G nucleotides. In Chromobacterium violaceum (strain ATCC 12472 / DSM 30191 / JCM 1249 / CCUG 213 / NBRC 12614 / NCIMB 9131 / NCTC 9757 / MK), this protein is GMP reductase.